The chain runs to 223 residues: Uracil-DNA glycosylase (223 aa).

Asp-67 functions as the Proton acceptor in the catalytic mechanism.

Belongs to the uracil-DNA glycosylase (UDG) superfamily. UNG family.

The protein resides in the cytoplasm. It carries out the reaction Hydrolyzes single-stranded DNA or mismatched double-stranded DNA and polynucleotides, releasing free uracil.. Excises uracil residues from the DNA which can arise as a result of misincorporation of dUMP residues by DNA polymerase or due to deamination of cytosine. The sequence is that of Uracil-DNA glycosylase from Borrelia hermsii (strain HS1 / DAH).